A 470-amino-acid chain; its full sequence is MFSLLLLTSTALVETALGVSPSYNGLGLTPQMGWNNWNTFACNVTEQLLLGTADRISELGLKDVGYNYVILDDCWSGGRSSNGSLVPDLNKFPHGMKYVADHLHDQDLLFGMYSSAGEYTCAGYPGSLGHEEKDAQFFARNEVDYLKYDNCYNKGQFGTPQASYERYKAMSDALNNTGRPIFYSLCNWGQDLTFYWGSAIANSWRMSGDITADFDRPDSRCPCGDDEYDCKYAGYHCSIMNILNKAAPMGQNANPGGWNDLDMLEVGVGNLTDDEEKAHFSMWAMVRSPLIIGADVNHLKPSSFSIYAQSPVIAINQDPRGVPATRVWRRQVSDTDAYGRGEVQFWSGPLENGDQVIAFLNGGNRMRPMNAGLDDIFFDSHPGAPELNSTWAVYDLWANRMEDSVASDILNGNRSSNGLLYNSTQQSYSQGLARNDSRLFGSQIGTIQAGGRLNVTVPAHGVGLYRLRLQ.

The signal sequence occupies residues 1 to 18 (MFSLLLLTSTALVETALG). Residues cysteine 42 and cysteine 74 are joined by a disulfide bond. Asparagine 43 carries an N-linked (GlcNAc...) asparagine glycan. Residues aspartate 72 and aspartate 73 each contribute to the substrate site. An N-linked (GlcNAc...) asparagine glycan is attached at asparagine 82. Cysteine 121 and cysteine 151 are joined by a disulfide. Lysine 147 serves as a coordination point for substrate. The active-site Nucleophile is the aspartate 149. Asparagine 175 carries N-linked (GlcNAc...) asparagine glycosylation. Arginine 205 provides a ligand contact to substrate. The active-site Proton donor is aspartate 209. Intrachain disulfides connect cysteine 221-cysteine 237 and cysteine 223-cysteine 230. A substrate-binding site is contributed by glutamine 251. Asparagine 270, asparagine 388, asparagine 413, asparagine 422, asparagine 435, and asparagine 454 each carry an N-linked (GlcNAc...) asparagine glycan.

Belongs to the glycosyl hydrolase 27 family. As to quaternary structure, homotetramer.

The protein resides in the secreted. The catalysed reaction is Hydrolysis of terminal, non-reducing alpha-D-galactose residues in alpha-D-galactosides, including galactose oligosaccharides, galactomannans and galactolipids.. In Zygotorulaspora mrakii (Zygosaccharomyces mrakii), this protein is Alpha-galactosidase (MEL).